The sequence spans 425 residues: Histidine--tRNA ligase (425 aa).

The protein belongs to the class-II aminoacyl-tRNA synthetase family. In terms of assembly, homodimer.

It localises to the cytoplasm. The enzyme catalyses tRNA(His) + L-histidine + ATP = L-histidyl-tRNA(His) + AMP + diphosphate + H(+). The polypeptide is Histidine--tRNA ligase (Histophilus somni (strain 2336) (Haemophilus somnus)).